Consider the following 93-residue polypeptide: Large ribosomal subunit protein uL23 (93 aa).

The protein belongs to the universal ribosomal protein uL23 family. In terms of assembly, part of the 50S ribosomal subunit. Contacts protein L29, and trigger factor when it is bound to the ribosome.

Functionally, one of the early assembly proteins it binds 23S rRNA. One of the proteins that surrounds the polypeptide exit tunnel on the outside of the ribosome. Forms the main docking site for trigger factor binding to the ribosome. The sequence is that of Large ribosomal subunit protein uL23 from Wolinella succinogenes (strain ATCC 29543 / DSM 1740 / CCUG 13145 / JCM 31913 / LMG 7466 / NCTC 11488 / FDC 602W) (Vibrio succinogenes).